The chain runs to 387 residues: Succinate--CoA ligase [ADP-forming] subunit beta (387 aa).

The 237-residue stretch at 9–245 (KDLLESYGLK…KSQENAKELK (237 aa)) folds into the ATP-grasp domain. ATP-binding positions include Lys46, 53-55 (GRG), Glu100, Tyr103, and Glu108. Positions 200 and 214 each coordinate Mg(2+). Substrate is bound by residues Asn265 and 322 to 324 (GIV).

It belongs to the succinate/malate CoA ligase beta subunit family. As to quaternary structure, heterotetramer of two alpha and two beta subunits. It depends on Mg(2+) as a cofactor.

The enzyme catalyses succinate + ATP + CoA = succinyl-CoA + ADP + phosphate. It carries out the reaction GTP + succinate + CoA = succinyl-CoA + GDP + phosphate. It participates in carbohydrate metabolism; tricarboxylic acid cycle; succinate from succinyl-CoA (ligase route): step 1/1. In terms of biological role, succinyl-CoA synthetase functions in the citric acid cycle (TCA), coupling the hydrolysis of succinyl-CoA to the synthesis of either ATP or GTP and thus represents the only step of substrate-level phosphorylation in the TCA. The beta subunit provides nucleotide specificity of the enzyme and binds the substrate succinate, while the binding sites for coenzyme A and phosphate are found in the alpha subunit. The protein is Succinate--CoA ligase [ADP-forming] subunit beta of Francisella tularensis subsp. tularensis (strain WY96-3418).